The sequence spans 512 residues: GMP synthase [glutamine-hydrolyzing] (512 aa).

The Glutamine amidotransferase type-1 domain maps to 6 to 195 (KIIILDFGSQ…VFNICGCQPK (190 aa)). Cysteine 83 acts as the Nucleophile in catalysis. Catalysis depends on residues histidine 169 and glutamate 171. The GMPS ATP-PPase domain occupies 196-387 (WKITEFISAA…LGIDFKFVYK (192 aa)). 223-229 (SGGVDSS) contacts ATP.

Homodimer.

The enzyme catalyses XMP + L-glutamine + ATP + H2O = GMP + L-glutamate + AMP + diphosphate + 2 H(+). It functions in the pathway purine metabolism; GMP biosynthesis; GMP from XMP (L-Gln route): step 1/1. Catalyzes the synthesis of GMP from XMP. In Spiroplasma kunkelii, this protein is GMP synthase [glutamine-hydrolyzing].